A 74-amino-acid polypeptide reads, in one-letter code: ATP synthase subunit 9, mitochondrial (74 aa).

2 consecutive transmembrane segments (helical) span residues 8–28 and 50–70; these read IGAG…GNVF and ILGF…AFLI.

Belongs to the ATPase C chain family. As to quaternary structure, F-type ATPases have 2 components, CF(1) - the catalytic core - and CF(0) - the membrane proton channel. CF(1) has five subunits: alpha(3), beta(3), gamma(1), delta(1), epsilon(1). CF(0) has three main subunits: a, b and c.

The protein resides in the mitochondrion membrane. Functionally, this protein is one of the chains of the nonenzymatic membrane component (F0) of mitochondrial ATPase. The sequence is that of ATP synthase subunit 9, mitochondrial (ATP9) from Brassica napus (Rape).